Reading from the N-terminus, the 182-residue chain is Large ribosomal subunit protein uL5 (182 aa).

This sequence belongs to the universal ribosomal protein uL5 family. As to quaternary structure, part of the 50S ribosomal subunit; part of the 5S rRNA/L5/L18/L25 subcomplex. Contacts the 5S rRNA and the P site tRNA. Forms a bridge to the 30S subunit in the 70S ribosome.

Functionally, this is one of the proteins that bind and probably mediate the attachment of the 5S RNA into the large ribosomal subunit, where it forms part of the central protuberance. In the 70S ribosome it contacts protein S13 of the 30S subunit (bridge B1b), connecting the 2 subunits; this bridge is implicated in subunit movement. Contacts the P site tRNA; the 5S rRNA and some of its associated proteins might help stabilize positioning of ribosome-bound tRNAs. This chain is Large ribosomal subunit protein uL5, found in Nostoc punctiforme (strain ATCC 29133 / PCC 73102).